The primary structure comprises 98 residues: NADH-quinone oxidoreductase subunit K (98 aa).

3 consecutive transmembrane segments (helical) span residues 1-21 (MGHLLGLGAVLFCISLAGIFL), 27-47 (IVLLMSIELMLLSVNVNFIAF), and 59-79 (FVFFILTVAAAEAAIGLAILV).

This sequence belongs to the complex I subunit 4L family. As to quaternary structure, NDH-1 is composed of 14 different subunits. Subunits NuoA, H, J, K, L, M, N constitute the membrane sector of the complex.

The protein localises to the cell inner membrane. The catalysed reaction is a quinone + NADH + 5 H(+)(in) = a quinol + NAD(+) + 4 H(+)(out). In terms of biological role, NDH-1 shuttles electrons from NADH, via FMN and iron-sulfur (Fe-S) centers, to quinones in the respiratory chain. The immediate electron acceptor for the enzyme in this species is believed to be ubiquinone. Couples the redox reaction to proton translocation (for every two electrons transferred, four hydrogen ions are translocated across the cytoplasmic membrane), and thus conserves the redox energy in a proton gradient. The protein is NADH-quinone oxidoreductase subunit K of Xanthomonas oryzae pv. oryzae (strain PXO99A).